The following is a 104-amino-acid chain: Histone H4 (104 aa).

The tract at residues 1-21 (MAGRGKVGKGYGKVGAKRHTK) is disordered.

This sequence belongs to the histone H4 family. As to quaternary structure, the nucleosome is a histone octamer containing two molecules each of H2A, H2B, H3 and H4 assembled in one H3-H4 heterotetramer and two H2A-H2B heterodimers. The octamer wraps approximately 147 bp of DNA.

Its subcellular location is the nucleus. It localises to the chromosome. In terms of biological role, core component of nucleosome. Nucleosomes wrap and compact DNA into chromatin, limiting DNA accessibility to the cellular machineries which require DNA as a template. Histones thereby play a central role in transcription regulation, DNA repair, DNA replication and chromosomal stability. DNA accessibility is regulated via a complex set of post-translational modifications of histones, also called histone code, and nucleosome remodeling. The protein is Histone H4 of Sterkiella nova (Ciliate).